The chain runs to 132 residues: Replication enhancer protein (132 aa).

This sequence belongs to the geminiviridae replication enhancer protein family. As to quaternary structure, homooligomer. Interacts with the replication-associated protein (REP). Interacts with host proliferating cell nuclear antigen (PCNA). Interacts with host retinoblastoma-related protein 1 (RBR1), and may thereby deregulate the host cell cycle. Oligomerization and interaction with PCNA are necessary for optimal replication enhancement.

In terms of biological role, increases viral DNA accumulation. Enhances infectivity and symptom expression. In Potato yellow mosaic virus (isolate Venezuela) (PYMV), this protein is Replication enhancer protein.